A 323-amino-acid polypeptide reads, in one-letter code: tRNA U34 carboxymethyltransferase (323 aa).

Carboxy-S-adenosyl-L-methionine is bound by residues Lys91, Trp105, Lys110, Gly130, 152–154 (DPT), 181–182 (IE), Met196, Tyr200, and Arg315.

It belongs to the class I-like SAM-binding methyltransferase superfamily. CmoB family. As to quaternary structure, homotetramer.

The enzyme catalyses carboxy-S-adenosyl-L-methionine + 5-hydroxyuridine(34) in tRNA = 5-carboxymethoxyuridine(34) in tRNA + S-adenosyl-L-homocysteine + H(+). In terms of biological role, catalyzes carboxymethyl transfer from carboxy-S-adenosyl-L-methionine (Cx-SAM) to 5-hydroxyuridine (ho5U) to form 5-carboxymethoxyuridine (cmo5U) at position 34 in tRNAs. This is tRNA U34 carboxymethyltransferase from Shigella dysenteriae serotype 1 (strain Sd197).